A 401-amino-acid chain; its full sequence is CCA-adding enzyme (401 aa).

ATP is bound by residues Gly32 and Arg35. CTP contacts are provided by Gly32 and Arg35. Mg(2+) is bound by residues Asp45 and Asp47. 5 residues coordinate ATP: Arg116, Asp159, Arg162, Arg165, and Arg168. Residues Arg116, Asp159, Arg162, Arg165, and Arg168 each contribute to the CTP site.

This sequence belongs to the tRNA nucleotidyltransferase/poly(A) polymerase family. Bacterial CCA-adding enzyme type 3 subfamily. In terms of assembly, homodimer. It depends on Mg(2+) as a cofactor.

The enzyme catalyses a tRNA precursor + 2 CTP + ATP = a tRNA with a 3' CCA end + 3 diphosphate. It carries out the reaction a tRNA with a 3' CCA end + 2 CTP + ATP = a tRNA with a 3' CCACCA end + 3 diphosphate. Catalyzes the addition and repair of the essential 3'-terminal CCA sequence in tRNAs without using a nucleic acid template. Adds these three nucleotides in the order of C, C, and A to the tRNA nucleotide-73, using CTP and ATP as substrates and producing inorganic pyrophosphate. tRNA 3'-terminal CCA addition is required both for tRNA processing and repair. Also involved in tRNA surveillance by mediating tandem CCA addition to generate a CCACCA at the 3' terminus of unstable tRNAs. While stable tRNAs receive only 3'-terminal CCA, unstable tRNAs are marked with CCACCA and rapidly degraded. The polypeptide is CCA-adding enzyme (Leuconostoc mesenteroides subsp. mesenteroides (strain ATCC 8293 / DSM 20343 / BCRC 11652 / CCM 1803 / JCM 6124 / NCDO 523 / NBRC 100496 / NCIMB 8023 / NCTC 12954 / NRRL B-1118 / 37Y)).